The primary structure comprises 334 residues: ADP-L-glycero-D-manno-heptose-6-epimerase (334 aa).

NADP(+)-binding positions include 11-12, 32-33, K39, K54, 77-81, and N94; these read FI, DN, and QGACS. Y141 (proton acceptor) is an active-site residue. Residue K145 coordinates NADP(+). Residue N171 participates in substrate binding. NADP(+) contacts are provided by V172 and K180. K180 serves as the catalytic Proton acceptor. Residues R182, H189, 203 to 206, R216, and Y295 each bind substrate; that span reads FGSN.

The protein belongs to the NAD(P)-dependent epimerase/dehydratase family. HldD subfamily. As to quaternary structure, homopentamer. Requires NADP(+) as cofactor.

The catalysed reaction is ADP-D-glycero-beta-D-manno-heptose = ADP-L-glycero-beta-D-manno-heptose. It participates in nucleotide-sugar biosynthesis; ADP-L-glycero-beta-D-manno-heptose biosynthesis; ADP-L-glycero-beta-D-manno-heptose from D-glycero-beta-D-manno-heptose 7-phosphate: step 4/4. In terms of biological role, catalyzes the interconversion between ADP-D-glycero-beta-D-manno-heptose and ADP-L-glycero-beta-D-manno-heptose via an epimerization at carbon 6 of the heptose. This Neisseria meningitidis serogroup C / serotype 2a (strain ATCC 700532 / DSM 15464 / FAM18) protein is ADP-L-glycero-D-manno-heptose-6-epimerase.